A 161-amino-acid chain; its full sequence is ATP synthase subunit b 1 (161 aa).

Residues 3–23 traverse the membrane as a helical segment; sequence FDASFFALVGLVLFFVLIAYL.

It belongs to the ATPase B chain family. F-type ATPases have 2 components, F(1) - the catalytic core - and F(0) - the membrane proton channel. F(1) has five subunits: alpha(3), beta(3), gamma(1), delta(1), epsilon(1). F(0) has three main subunits: a(1), b(2) and c(10-14). The alpha and beta chains form an alternating ring which encloses part of the gamma chain. F(1) is attached to F(0) by a central stalk formed by the gamma and epsilon chains, while a peripheral stalk is formed by the delta and b chains.

It is found in the cell inner membrane. F(1)F(0) ATP synthase produces ATP from ADP in the presence of a proton or sodium gradient. F-type ATPases consist of two structural domains, F(1) containing the extramembraneous catalytic core and F(0) containing the membrane proton channel, linked together by a central stalk and a peripheral stalk. During catalysis, ATP synthesis in the catalytic domain of F(1) is coupled via a rotary mechanism of the central stalk subunits to proton translocation. Functionally, component of the F(0) channel, it forms part of the peripheral stalk, linking F(1) to F(0). In Agrobacterium fabrum (strain C58 / ATCC 33970) (Agrobacterium tumefaciens (strain C58)), this protein is ATP synthase subunit b 1.